A 439-amino-acid chain; its full sequence is Divalent metal cation transporter MntH (439 aa).

A run of 11 helical transmembrane segments spans residues 32 to 52 (GASM…AYMD), 67 to 87 (GYAL…FQSL), 121 to 141 (IAAM…LSLL), 144 to 164 (MPLL…LLLE), 173 to 193 (LAIG…LFIT), 214 to 234 (ALLI…LFLH), 261 to 281 (VVVA…MAAG), 301 to 321 (APLL…ASGI), 350 to 370 (AVTM…TQAL), 371 to 391 (VLSQ…LLWF), and 406 to 426 (FIAV…AVLI).

It belongs to the NRAMP family.

It localises to the cell inner membrane. H(+)-stimulated, divalent metal cation uptake system. This chain is Divalent metal cation transporter MntH, found in Verminephrobacter eiseniae (strain EF01-2).